The following is a 209-amino-acid chain: Large ribosomal subunit protein uL3 (209 aa).

Residues 112 to 122 show a composition bias toward polar residues; sequence GTTRGHGTQGN. Residues 112–146 form a disordered region; it reads GTTRGHGTQGNIKRWGQSRGPETHGSRYHRIPGSM.

This sequence belongs to the universal ribosomal protein uL3 family. As to quaternary structure, part of the 50S ribosomal subunit. Forms a cluster with proteins L14 and L19.

In terms of biological role, one of the primary rRNA binding proteins, it binds directly near the 3'-end of the 23S rRNA, where it nucleates assembly of the 50S subunit. The chain is Large ribosomal subunit protein uL3 from Lactobacillus gasseri (strain ATCC 33323 / DSM 20243 / BCRC 14619 / CIP 102991 / JCM 1131 / KCTC 3163 / NCIMB 11718 / NCTC 13722 / AM63).